Consider the following 159-residue polypeptide: Regulator of G-protein signaling 13 (159 aa).

The RGS domain occupies 34–150 (SFENLMATKY…LKSEMYQKLL (117 aa)).

Inhibits signal transduction by increasing the GTPase activity of G protein alpha subunits thereby driving them into their inactive GDP-bound form. Binds to both G(i)-alpha and G(q)-alpha. This Homo sapiens (Human) protein is Regulator of G-protein signaling 13 (RGS13).